Here is a 246-residue protein sequence, read N- to C-terminus: Mast cell protease-like protein (246 aa).

The signal sequence occupies residues 1–18 (MQALLFLMALLLPSGAGA). A propeptide spans 19 to 20 (EE) (activation peptide). Positions 21 to 244 (IIGGVESEPH…HVPWINRVIK (224 aa)) constitute a Peptidase S1 domain. Cysteine 50 and cysteine 66 are disulfide-bonded. Active-site charge relay system residues include histidine 65 and aspartate 109. Cystine bridges form between cysteine 143/cysteine 208 and cysteine 174/cysteine 187. Serine 202 (charge relay system) is an active-site residue.

Belongs to the peptidase S1 family. Granzyme subfamily.

The protein is Mast cell protease-like protein (Mcptl) of Mus musculus (Mouse).